The sequence spans 461 residues: ADP-specific phosphofructokinase (461 aa).

The ADPK domain maps to 1-457 (MVRELLEKAR…FASYLAMLKE (457 aa)). 3 residues coordinate Mg(2+): glutamate 268, glutamate 298, and aspartate 441. Aspartate 441 (proton acceptor) is an active-site residue.

It belongs to the carbohydrate kinase PfkC family. The cofactor is Mg(2+).

The protein resides in the cytoplasm. It catalyses the reaction beta-D-fructose 6-phosphate + ADP = beta-D-fructose 1,6-bisphosphate + AMP + H(+). The protein operates within carbohydrate degradation; glycolysis. Its function is as follows. Catalyzes the phosphorylation of fructose 6-phosphate to fructose 1,6-bisphosphate using ADP as the phosphate donor. The protein is ADP-specific phosphofructokinase of Thermococcus zilligii.